Reading from the N-terminus, the 155-residue chain is 17.6 kDa class I heat shock protein 1 (155 aa).

In terms of domain architecture, sHSP spans 39–154; it reads SSSAIANARV…KAQVKSIDIS (116 aa).

This sequence belongs to the small heat shock protein (HSP20) family. In terms of assembly, forms oligomeric structures. Binds to AKR2A.

The protein resides in the cytoplasm. In terms of biological role, possesses chaperone activity. This Arabidopsis thaliana (Mouse-ear cress) protein is 17.6 kDa class I heat shock protein 1 (HSP17.6A).